We begin with the raw amino-acid sequence, 457 residues long: Angiopoietin-related protein 6 (457 aa).

A signal peptide spans 1-24 (MGTARLRKLQLLLLLGAWRALGGA). 2 coiled-coil regions span residues 51-77 (DSEL…RAAE) and 126-164 (LLAE…QHSS). The segment at 201 to 235 (SNTSRRLDQTPEHQREQSLRQQGPPSSLLPTGHLA) is disordered. A glycan (N-linked (GlcNAc...) asparagine) is linked at N202. Residues 205 to 218 (RRLDQTPEHQREQS) are compositionally biased toward basic and acidic residues. Positions 219–229 (LRQQGPPSSLL) are enriched in polar residues. Positions 238–456 (TRPVGPWRDC…KAVMLTRLVR (219 aa)) constitute a Fibrinogen C-terminal domain. Disulfide bonds link C247/C274 and C397/C410.

Highly expressed in the liver, specifically in hepatocytes, and weakly in the heart. Expressed in hematopoietic cells, platelets and mast cells, and detected at wounded skin.

The protein localises to the secreted. Functionally, may play a role in the wound healing process. May promote epidermal proliferation, remodeling and regeneration. May promote the chemotactic activity of endothelial cells and induce neovascularization. May counteract high-fat diet-induced obesity and related insulin resistance through increased energy expenditure. The protein is Angiopoietin-related protein 6 (Angptl6) of Mus musculus (Mouse).